Here is a 274-residue protein sequence, read N- to C-terminus: GPN-loop GTPase 3 (274 aa).

Gly13–Thr18 is a GTP binding site. Positions Gly70 to Asn72 match the Gly-Pro-Asn (GPN)-loop; involved in dimer interface motif. Residue Ser173–Asp176 coordinates GTP. The interval Ser255–Glu274 is disordered. Positions Glu265–Glu274 are enriched in acidic residues.

It belongs to the GPN-loop GTPase family. As to quaternary structure, heterodimers with GPN1 or GPN2. Binds to RNA polymerase II (RNAPII).

Small GTPase required for proper nuclear import of RNA polymerase II and III (RNAPII and RNAPIII). May act at an RNAP assembly step prior to nuclear import. This is GPN-loop GTPase 3 from Debaryomyces hansenii (strain ATCC 36239 / CBS 767 / BCRC 21394 / JCM 1990 / NBRC 0083 / IGC 2968) (Yeast).